Consider the following 119-residue polypeptide: Protein TusC (119 aa).

It belongs to the DsrF/TusC family. Heterohexamer, formed by a dimer of trimers. The hexameric TusBCD complex contains 2 copies each of TusB, TusC and TusD. The TusBCD complex interacts with TusE.

Its subcellular location is the cytoplasm. Functionally, part of a sulfur-relay system required for 2-thiolation of 5-methylaminomethyl-2-thiouridine (mnm(5)s(2)U) at tRNA wobble positions. The protein is Protein TusC of Escherichia coli O127:H6 (strain E2348/69 / EPEC).